The primary structure comprises 249 residues: MPIPVFFNQQYPTLVDICARWQLVYDANATFELRFESDTLSLHNRDEPKLDGIVVDFVTGAVAHRRKFGGGRGQSIAKAVGLKQGVTPKVVDGTAGLGRDAFVLASLGCTVTMVERHPVVAALLEDGLRRAYQDAEIGDWMRERMQLFHGSSLEALAKLEQGVDVVYLDPMYPHRDKSALVKKEMRVFQTLVGADLDADGLLAPAMALASKRVVVKRPDYAEDLAGVKPSMVIETKKNRFDVYVKSAMK.

S-adenosyl-L-methionine is bound by residues 99-100, 115-116, 151-152, and aspartate 169; these read RD, ER, and SS.

This sequence belongs to the methyltransferase superfamily. RsmJ family.

The protein resides in the cytoplasm. It catalyses the reaction guanosine(1516) in 16S rRNA + S-adenosyl-L-methionine = N(2)-methylguanosine(1516) in 16S rRNA + S-adenosyl-L-homocysteine + H(+). Its function is as follows. Specifically methylates the guanosine in position 1516 of 16S rRNA. This chain is Ribosomal RNA small subunit methyltransferase J, found in Shewanella oneidensis (strain ATCC 700550 / JCM 31522 / CIP 106686 / LMG 19005 / NCIMB 14063 / MR-1).